The following is a 340-amino-acid chain: Pseudaminic acid synthase (340 aa).

An AFP-like domain is found at 281–337 (SLFVIKDIQKGEALTENNIKALRPNLGLHPKFYKEILGQKASKFLKANTPLSADDIE).

This sequence belongs to the pseudaminic acid synthase family. The cofactor is a divalent metal cation.

It catalyses the reaction 2,4-diacetamido-2,4,6-trideoxy-beta-L-altrose + phosphoenolpyruvate + H2O = pseudaminate + phosphate. Functionally, catalyzes the fifth step in the biosynthesis of pseudaminic acid, a sialic-acid-like sugar that is used to modify flagellin. Catalyzes the condensation of phosphoenolpyruvate with 2,4-diacetamido-2,4,6-trideoxy-beta-l-altropyranose, forming pseudaminic acid. The polypeptide is Pseudaminic acid synthase (pseI) (Helicobacter pylori (strain ATCC 700392 / 26695) (Campylobacter pylori)).